The chain runs to 715 residues: NADH-ubiquinone oxidoreductase chain 5 (715 aa).

The next 17 membrane-spanning stretches (helical) occupy residues 1 to 21 (MYLS…FFGR), 30 to 50 (LITC…FFEV), 81 to 101 (LTVA…IYSI), 119 to 139 (LFTF…MFVG), 140 to 160 (WEGV…RIAA), 177 to 197 (FLTI…YATV), 200 to 220 (LAPY…LIGA), 241 to 261 (TPVS…YLLM), 274 to 294 (LLLC…IGLF), 310 to 330 (LGMM…FHLI), 331 to 351 (NHAF…HAVA), 366 to 386 (LPLT…FPYM), 403 to 423 (FSFS…FTTL), 487 to 507 (GFFL…FGFI), 543 to 563 (TLFK…ALVL), 647 to 667 (IVTN…FTFI), and 668 to 688 (SLLE…LSLT).

This sequence belongs to the complex I subunit 5 family.

Its subcellular location is the mitochondrion inner membrane. The catalysed reaction is a ubiquinone + NADH + 5 H(+)(in) = a ubiquinol + NAD(+) + 4 H(+)(out). In terms of biological role, core subunit of the mitochondrial membrane respiratory chain NADH dehydrogenase (Complex I) that is believed to belong to the minimal assembly required for catalysis. Complex I functions in the transfer of electrons from NADH to the respiratory chain. The immediate electron acceptor for the enzyme is believed to be ubiquinone. The chain is NADH-ubiquinone oxidoreductase chain 5 (ndh-5) from Neurospora crassa (strain ATCC 24698 / 74-OR23-1A / CBS 708.71 / DSM 1257 / FGSC 987).